A 394-amino-acid polypeptide reads, in one-letter code: Putative nickel insertion protein (394 aa).

The protein belongs to the LarC family.

This Syntrophotalea carbinolica (strain DSM 2380 / NBRC 103641 / GraBd1) (Pelobacter carbinolicus) protein is Putative nickel insertion protein.